The following is a 506-amino-acid chain: Steroid (22S)-hydroxylase (506 aa).

The helical transmembrane segment at 12-32 (LLFFLPFILLALLTFYTTTVA) threads the bilayer. Cysteine 449 provides a ligand contact to heme.

Belongs to the cytochrome P450 family. It depends on heme as a cofactor. As to expression, highly expressed in roots and leaf blades. Expressed in shoot apex, stems, leaf sheaths, inflorescences and flowers.

The protein localises to the membrane. It carries out the reaction a C28-steroid + reduced [NADPH--hemoprotein reductase] + O2 = a (22S)-22-hydroxy C28-steroid + oxidized [NADPH--hemoprotein reductase] + H2O + H(+). The enzyme catalyses campesterol + reduced [NADPH--hemoprotein reductase] + O2 = (22S)-22-hydroxycampesterol + oxidized [NADPH--hemoprotein reductase] + H2O + H(+). It catalyses the reaction campestanol + reduced [NADPH--hemoprotein reductase] + O2 = 6-deoxycathasterone + oxidized [NADPH--hemoprotein reductase] + H2O + H(+). It participates in plant hormone biosynthesis; brassinosteroid biosynthesis. Functionally, catalyzes the C22-alpha-hydroxylation step in brassinosteroid biosynthesis, which is the rate-limiting step in this biosynthetic pathway. Catalyzes the conversion of campesterol (CR) to (22S)-22-hydroxycampesterol (22-OHCR, 22-hydroxyCR) and of campestanol (CN) to 6-deoxycathasterone (6-deoxoCT). Required for auxin responses involved in the regulation of epidermal cells length of the lamina joint. This chain is Steroid (22S)-hydroxylase, found in Oryza sativa subsp. japonica (Rice).